Reading from the N-terminus, the 263-residue chain is tRNA (guanine-N(7)-)-methyltransferase (263 aa).

Residues 1–10 (MLPQDPSTEP) show a composition bias toward polar residues. The tract at residues 1–38 (MLPQDPSTEPTPADDAAPVDSAGQASAPSPADPEGVAH) is disordered. The S-adenosyl-L-methionine site is built by E91, E116, D143, and D166. D166 is an active-site residue. K170 is a binding site for substrate. The segment at 172 to 177 (RHNKRR) is interaction with RNA. Substrate contacts are provided by residues D202 and 240–243 (TKFE).

Belongs to the class I-like SAM-binding methyltransferase superfamily. TrmB family.

It catalyses the reaction guanosine(46) in tRNA + S-adenosyl-L-methionine = N(7)-methylguanosine(46) in tRNA + S-adenosyl-L-homocysteine. It participates in tRNA modification; N(7)-methylguanine-tRNA biosynthesis. Its function is as follows. Catalyzes the formation of N(7)-methylguanine at position 46 (m7G46) in tRNA. This chain is tRNA (guanine-N(7)-)-methyltransferase, found in Cupriavidus necator (strain ATCC 17699 / DSM 428 / KCTC 22496 / NCIMB 10442 / H16 / Stanier 337) (Ralstonia eutropha).